Reading from the N-terminus, the 562-residue chain is MDKRHDPSRRIIAPTGTELSCKSWLTEAPLRMLMNNLHPDVAERPEDLVVYGGIGRAARDWECYDKIVEVLQRLEEDETLLVQSGKPVGVFKTHNNAPRVIIANSNLVPHWANWEHFNELDKKGLAMYGQMTAGSWIYIGSQGIVQGTYETFVAMAKQHFNGSSAGKWILTGGLGGMGGAQPLAGTMAGYSVLTCEVDETRIDFRLRTKYVDKKATTLDEALAMIDEANKSGKPVSVGLLANAADVFAELVERGITPDVVTDQTSAHDPLNGYLPQGWTLEQAIEMRKTDEAAVVKAAKQSMAVQVKAMLALQAAGAATTDYGNNIRQMAFEEGVENAFDFPGFVPAYVRPLFCEGIGPFRWVALSGDPEDIYKTDAKVKELIPDNPHLHNWLDMARERIAFQGLPSRICWVGLKDRARLALAFNEMVKNGELSAPVVIGRDHLDSGSVASPNRETESMLDGSDAVSDWPLMNALLNTASGATWVSLHHGGGVGMGFSQHSGVVIVADGTDDAAARLGRVLWNDPATGVMRHADAGYDIAKNCAKEQGLDLPMLEKATTEGK.

NAD(+) is bound by residues 52–53, glutamine 130, 176–178, glutamate 196, arginine 201, 242–243, 263–267, 273–274, and tyrosine 322; these read GG, GMG, NA, QTSAH, and YL. Residue cysteine 410 is part of the active site. Glycine 492 provides a ligand contact to NAD(+).

Belongs to the urocanase family. The cofactor is NAD(+).

The protein resides in the cytoplasm. The enzyme catalyses 4-imidazolone-5-propanoate = trans-urocanate + H2O. The protein operates within amino-acid degradation; L-histidine degradation into L-glutamate; N-formimidoyl-L-glutamate from L-histidine: step 2/3. Its function is as follows. Catalyzes the conversion of urocanate to 4-imidazolone-5-propionate. The polypeptide is Urocanate hydratase (Shewanella pealeana (strain ATCC 700345 / ANG-SQ1)).